Reading from the N-terminus, the 398-residue chain is Acetate kinase (398 aa).

Asn-7 lines the Mg(2+) pocket. An ATP-binding site is contributed by Lys-14. Arg-92 contacts substrate. The active-site Proton donor/acceptor is the Asp-149. ATP-binding positions include 209–213, 284–286, and 332–336; these read HLGNG, DFR, and GVGEN. Glu-385 is a Mg(2+) binding site.

The protein belongs to the acetokinase family. As to quaternary structure, homodimer. Requires Mg(2+) as cofactor. It depends on Mn(2+) as a cofactor.

The protein localises to the cytoplasm. The catalysed reaction is acetate + ATP = acetyl phosphate + ADP. The protein operates within metabolic intermediate biosynthesis; acetyl-CoA biosynthesis; acetyl-CoA from acetate: step 1/2. Functionally, catalyzes the formation of acetyl phosphate from acetate and ATP. Can also catalyze the reverse reaction. This chain is Acetate kinase, found in Clostridioides difficile (strain 630) (Peptoclostridium difficile).